Consider the following 64-residue polypeptide: Large ribosomal subunit protein bL35 (64 aa).

Disordered stretches follow at residues 1 to 20 and 37 to 64; these read MPKAKTHSGASKRFRRTGTG and PTKRTRRLAGRTQVSANDAPRINKMLNG.

Belongs to the bacterial ribosomal protein bL35 family.

The chain is Large ribosomal subunit protein bL35 from Mycobacterium sp. (strain JLS).